The chain runs to 517 residues: MAAAITDMADLEELSRLSPLPPGSPGSAARGRAEPPEEEEEEEEEEEEAEAEAVAALLLNGGSGGGGGGGGGGVGGGEAETMSEPSPESASQAGEDEDEEEDDEEEEDESSSSGGGEEESSAESLVGSSGGSSSDETRSLSPGAASSSSGDGDGKEGLEEPKGPRGSQGGGGGGSSSSSVVSSGGDEGYGTGGGGSSATSGGRRGSLEMSSDGEPLSRMDSEDSISSTIMDVDSTISSGRSTPAMMNGQGSTTSSSKNIAYNCCWDQCQACFNSSPDLADHIRSIHVDGQRGGVFVCLWKGCKVYNTPSTSQSWLQRHMLTHSGDKPFKCVVGGCNASFASQGGLARHVPTHFSQQNSSKVSSQPKAKEESPSKAGMNKRRKLKNKRRRSLPRPHDFFDAQTLDAIRHRAICFNLSAHIESLGKGHSVVFHSTVIAKRKEDSGKIKLLLHWMPEDILPDVWVNESERHQLKTKVVHLSKLPKDTALLLDPNIYRTMPQKRLKRTLIRKVFNLYLSKQ.

The disordered stretch occupies residues 1–229 (MAAAITDMAD…DSEDSISSTI (229 aa)). Ala-2 is modified (N-acetylalanine). Ser-18 and Ser-24 each carry phosphoserine. The segment covering 36 to 51 (PEEEEEEEEEEEEAEA) has biased composition (acidic residues). Positions 61 to 78 (GGSGGGGGGGGGGVGGGE) are enriched in gly residues. The span at 94 to 121 (GEDEDEEEDDEEEEDESSSSGGGEEESS) shows a compositional bias: acidic residues. Residues 122-150 (AESLVGSSGGSSSDETRSLSPGAASSSSG) are compositionally biased toward low complexity. Ser-141 bears the Phosphoserine mark. Positions 152 to 163 (GDGKEGLEEPKG) are enriched in basic and acidic residues. Composition is skewed to gly residues over residues 166 to 175 (GSQGGGGGGS) and 185 to 196 (GDEGYGTGGGGS). 3 positions are modified to phosphoserine: Ser-206, Ser-210, and Ser-211. An interaction with RBBP4 region spans residues 209-294 (MSSDGEPLSR…IHVDGQRGGV (86 aa)). A C2H2-type 1 zinc finger spans residues 261 to 286 (YNCCWDQCQACFNSSPDLADHIRSIH). Residues 300–322 (KGCKVYNTPSTSQSWLQRHMLTH) form a C2H2-type 2; degenerate zinc finger. The C2H2-type 3 zinc-finger motif lies at 328–352 (FKCVVGGCNASFASQGGLARHVPTH). The span at 352 to 365 (HFSQQNSSKVSSQP) shows a compositional bias: polar residues. The tract at residues 352 to 394 (HFSQQNSSKVSSQPKAKEESPSKAGMNKRRKLKNKRRRSLPRP) is disordered. Positions 377–392 (MNKRRKLKNKRRRSLP) are enriched in basic residues. A Phosphoserine modification is found at Ser-390. Residues 407–478 (RHRAICFNLS…QLKTKVVHLS (72 aa)) are interaction with SUZ12. The segment at 495-517 (TMPQKRLKRTLIRKVFNLYLSKQ) is important for nucleosome binding activity of the PRC2 complex.

The protein belongs to the AEBP2/jing C2H2-type zinc-finger family. Self-associates. Associates with the PRC2 complex, which consists of the core components EED, EZH1 or EZH2, SUZ12, and RBBP4, and various combinations of accessory subunits including AEBP2, JARID2, PHF19, MTF2 and EPOP. Found in a monomeric PRC2.2 (class 2) complex consisting of at least SUZ12, RBBP4, AEBP2 and JARID2. Within the PRC2 complex, interacts directly with SUZ12; competes with PHF19 for SUZ12 binding. Interacts with EED, EZH2, and RBBP4. May also interact with RBBP7.

It localises to the nucleus. Its function is as follows. Acts as an accessory subunit for the core Polycomb repressive complex 2 (PRC2), which mediates histone H3K27 (H3K27me3) trimethylation on chromatin leading to transcriptional repression of the affected target gene. Plays a role in nucleosome localization of the PRC2 complex. The sequence is that of Zinc finger protein AEBP2 (AEBP2) from Homo sapiens (Human).